The following is a 251-amino-acid chain: Small ribosomal subunit protein uS2 (251 aa).

This sequence belongs to the universal ribosomal protein uS2 family.

In Nitrosomonas europaea (strain ATCC 19718 / CIP 103999 / KCTC 2705 / NBRC 14298), this protein is Small ribosomal subunit protein uS2.